Here is a 1611-residue protein sequence, read N- to C-terminus: Non-structural polyprotein 1AB (1611 aa).

The stretch at 124 to 187 forms a coiled coil; that stretch reads TTSNLIARAM…ELHLLKELGK (64 aa). Helical transmembrane passes span 195-215, 329-348, 353-373, 375-395, 397-417, 426-446, and 450-470; these read AFSFFDWLFMAVVFFLFLHYT, ISYYKLDALVTFAFSAALAT, MVMVLPLLLVALYLNVPPITV, IASVIFQPLILPFVGFQLVFP, FLPYNLFVAWVWMVCQAFFSS, VSTALVQVVFLAVWSISVIVL, and SIPMVAQILLFVATLTVSVGV. Residues His-550, Asp-582, and Ser-647 each act as charge relay system; for serine protease activity in the active site. Tyr-833 bears the O-(5'-phospho-RNA)-tyrosine mark. Positions 1352-1486 constitute a RdRp catalytic domain; it reads RYYVELDWTR…AVDKRFINSY (135 aa).

This sequence belongs to the astroviridae polyprotein 1AB family. Monomer. Post-translationally, cleaved by the viral and host proteases. The protease is probably autocatalytically cleaved.

It localises to the host membrane. It catalyses the reaction RNA(n) + a ribonucleoside 5'-triphosphate = RNA(n+1) + diphosphate. In terms of biological role, responsible for the cleavage of the polyprotein into functional products. Functionally, protein covalently attached to the 5' extremity of the genomic and subgenomic RNAs. It may serve as a primer for the replicase. This chain is Non-structural polyprotein 1AB (ORF1), found in Turkey astrovirus 1 (TAstV-1).